The primary structure comprises 1377 residues: Neogenin (1377 aa).

An N-terminal signal peptide occupies residues 1–2 (AA). Residues 3-1074 (AKNGSPPQSA…PTSPLDSNML (1072 aa)) lie on the Extracellular side of the membrane. Ig-like C2-type domains follow at residues 21–114 (PLYF…RTAK), 121–206 (PRFT…EAEL), 198–305 (PKFS…AELT), and 310–395 (PEFL…AQLI). Asparagine 42 carries an N-linked (GlcNAc...) asparagine glycan. Cystine bridges form between cysteine 43/cysteine 98, cysteine 142/cysteine 190, and cysteine 239/cysteine 289. A glycan (N-linked (GlcNAc...) asparagine) is linked at asparagine 179. Asparagine 295 is a glycosylation site (N-linked (GlcNAc...) asparagine). A disulfide bond links cysteine 331 and cysteine 379. 6 consecutive Fibronectin type-III domains span residues 410-504 (APRD…TQPE), 510-600 (PAPN…TLSD), 605-700 (APQN…TFES), 710-800 (VPSS…RPHT), 825-924 (PPVG…LVPT), and 926-1023 (PPKD…TPKA). Asparagine 439 and asparagine 458 each carry an N-linked (GlcNAc...) asparagine glycan. Residues asparagine 608 and asparagine 684 are each glycosylated (N-linked (GlcNAc...) asparagine). The N-linked (GlcNAc...) asparagine glycan is linked to asparagine 878. The disordered stretch occupies residues 1010-1066 (GPMSEAVQFRTPKADSSDKMPNDQALGSAGKGGRLPDLGSDYKPPMSGSNSPHGSPT). Basic and acidic residues predominate over residues 1021 to 1030 (PKADSSDKMP). Positions 1056 to 1066 (SGSNSPHGSPT) are enriched in polar residues. Residues 1075-1095 (LVIIVSIGVITIVVVVIIAVF) traverse the membrane as a helical segment. Over 1096-1377 (CTRRTTSHQK…MKDLNAITTA (282 aa)) the chain is Cytoplasmic. A disordered region spans residues 1143–1281 (PIDKSPDPNP…SHPLKSFAVP (139 aa)). Serine 1147 and serine 1163 each carry phosphoserine. Polar residues-rich tracts occupy residues 1160–1176 (PRNS…MDSN), 1213–1238 (QPPQ…TCCT), and 1246–1265 (ATSS…QSLP). Phosphothreonine is present on threonine 1167. Phosphoserine is present on serine 1317. The residue at position 1320 (threonine 1320) is a Phosphothreonine. Serine 1348, serine 1350, and serine 1351 each carry phosphoserine.

It belongs to the immunoglobulin superfamily. DCC family. As to quaternary structure, interacts with MYO10. Interacts with RGMA and RGMB. Interacts with BMP2, BMP4, BMP6, and BMP7.

The protein resides in the cell membrane. Multi-functional cell surface receptor regulating cell adhesion in many diverse developmental processes, including neural tube and mammary gland formation, myogenesis and angiogenesis. Receptor for members of the BMP, netrin, and repulsive guidance molecule (RGM) families. Netrin-Neogenin interactions result in a chemoattractive axon guidance response and cell-cell adhesion, the interaction between NEO1/Neogenin and RGMa and RGMb induces a chemorepulsive response. In Rattus norvegicus (Rat), this protein is Neogenin (Neo1).